The following is a 963-amino-acid chain: MHC class II regulatory factor RFX1 (963 aa).

4 disordered regions span residues 1–88 (MATQ…APSP), 105–126 (ASETVSEASPSSTASQTGVPTQ), 174–218 (QSPA…GTPA), and 361–392 (SSSEAGASNSSVGAGGNGGGGSSGGGSGGSSG). Positions 20 to 41 (PQAPPQALPQPPPPAAPQPPAA) are enriched in pro residues. Over residues 42-67 (ATPQPQYVTELQSPQPQTQPPGSQKQ) the composition is skewed to low complexity. A Phosphoserine modification is found at Ser-54. A compositionally biased stretch (pro residues) spans 75-87 (APAPSQPATPAPS). Polar residues-rich tracts occupy residues 107-119 (ETVSEASPSSTAS), 181-196 (KSGQVSLTVHSAQQVH), and 204-214 (VQANNSTSKTA). Over residues 361–372 (SSSEAGASNSSV) the composition is skewed to low complexity. Over residues 373–392 (GAGGNGGGGSSGGGSGGSSG) the composition is skewed to gly residues. The segment at residues 423–498 (TVQWLLDNYE…YHYYGLRIKA (76 aa)) is a DNA-binding region (RFX-type winged-helix). Residues 899 to 948 (SLNPLDPDKDEEEEEEEESEDELPQDISLAAGSESPALGPEALEPPAKLA) are disordered. The span at 906–922 (DKDEEEEEEEESEDELP) shows a compositional bias: acidic residues. The segment covering 932–947 (ESPALGPEALEPPAKL) has biased composition (low complexity). Residues Ser-962 and Ser-963 each carry the phosphoserine modification.

This sequence belongs to the RFX family. As to quaternary structure, homodimer; binds DNA as a homodimer. Heterodimer; heterodimerizes with RFX2 and RFX3.

It is found in the nucleus. Regulatory factor essential for MHC class II genes expression. Binds to the X boxes of MHC class II genes. This chain is MHC class II regulatory factor RFX1 (Rfx1), found in Mus musculus (Mouse).